The chain runs to 336 residues: MTAIDFHKLAKIELHCHLDGSLSLSTIRHLAELAQIDLPEDDEELKQHVTAPVTCESLLEYLESFDYIRPLLQTNEALTIAAYDVAKQAALENVIYIEVRFAPELSMDKGLTVTETIDAVCQGLRQAQEEFGIIAKALVCGMRQSDQSLTACILDEANQVRDSDFVGFDFAGDELNYGPAAIKPLIEQVKSYNRPMTFHAGECGCPAFLAESIAMGIKRNGHATILAQEPELLDEFVKNGVTGELCLTSNLQTKAAVTVNDFPYLKMKAAGANITINTDNRTVSDTNLTKEYELYHKYFDSTVQDFYAHNKTAIEASFASDEEKEELLARLAKAYS.

The Zn(2+) site is built by H15 and H17. Residues H17, D19, and G172 each contribute to the substrate site. H199 lines the Zn(2+) pocket. E202 acts as the Proton donor in catalysis. D279 is a Zn(2+) binding site.

It belongs to the metallo-dependent hydrolases superfamily. Adenosine and AMP deaminases family. Adenosine deaminase subfamily. It depends on Zn(2+) as a cofactor.

It carries out the reaction adenosine + H2O + H(+) = inosine + NH4(+). The enzyme catalyses 2'-deoxyadenosine + H2O + H(+) = 2'-deoxyinosine + NH4(+). In terms of biological role, catalyzes the hydrolytic deamination of adenosine and 2-deoxyadenosine. This is Adenosine deaminase from Streptococcus thermophilus (strain ATCC BAA-491 / LMD-9).